The primary structure comprises 463 residues: Elongation factor 1-alpha (463 aa).

The residue at position 2 (Gly2) is a N,N,N-trimethylglycine. Residue Lys3 is modified to N6,N6-dimethyllysine; alternate. Lys3 is modified (N6-methyllysine; alternate). The region spanning 5 to 239 (KNHVNVVVIG…DAIEPPSRPT (235 aa)) is the tr-type G domain. The segment at 14–21 (GHVDSGKS) is G1. A GTP-binding site is contributed by 14-21 (GHVDSGKS). Lys30 is subject to N6-methyllysine. The tract at residues 70–74 (GITID) is G2. An N6,N6,N6-trimethyllysine modification is found at Lys79. Residues 91–94 (DAPG) form a G3 region. GTP is bound by residues 91-95 (DAPGH) and 153-156 (NKMD). Residues 153–156 (NKMD) form a G4 region. Residues 191–193 (SGW) form a G5 region. At Lys315 the chain carries N6,N6-dimethyllysine; alternate. Lys315 is subject to N6-methyllysine; alternate. Residue Lys389 is modified to N6-methyllysine.

It belongs to the TRAFAC class translation factor GTPase superfamily. Classic translation factor GTPase family. EF-Tu/EF-1A subfamily.

It localises to the cytoplasm. In terms of biological role, this protein promotes the GTP-dependent binding of aminoacyl-tRNA to the A-site of ribosomes during protein biosynthesis. The protein is Elongation factor 1-alpha (TEF) of Puccinia graminis (Black stem rust fungus).